We begin with the raw amino-acid sequence, 472 residues long: Adenosylhomocysteinase (472 aa).

Residues Thr-61, Asp-136, and Glu-196 each coordinate substrate. 197 to 199 (TTT) provides a ligand contact to NAD(+). The substrate site is built by Lys-226 and Asp-230. NAD(+) is bound by residues Asn-231, 260–265 (GYGDVG), Glu-283, Asn-318, 339–341 (IGH), and Asn-384.

Belongs to the adenosylhomocysteinase family. It depends on NAD(+) as a cofactor.

Its subcellular location is the cytoplasm. It catalyses the reaction S-adenosyl-L-homocysteine + H2O = L-homocysteine + adenosine. It participates in amino-acid biosynthesis; L-homocysteine biosynthesis; L-homocysteine from S-adenosyl-L-homocysteine: step 1/1. Its function is as follows. May play a key role in the regulation of the intracellular concentration of adenosylhomocysteine. The protein is Adenosylhomocysteinase of Cupriavidus necator (strain ATCC 17699 / DSM 428 / KCTC 22496 / NCIMB 10442 / H16 / Stanier 337) (Ralstonia eutropha).